A 1129-amino-acid chain; its full sequence is Protein TPR1 (1129 aa).

A LisH domain is found at 4–36 (LSRELVFLILQFLDEEKFKETVHKLEQESGFFF). The CTLH domain occupies 34–92 (FFFNMKYFEEKVHAGEWDEVEKYLSGFTKVDDNRYSMKIFFEIRKQKYLEALDRHDRAK). WD repeat units lie at residues 337–377 (SQGS…RLFS), 398–437 (ESSISINRVTWSPDGDLIGVAFAKHLIHLHAYQQPNETRQ), 443–485 (AHSG…FSFE), 487–527 (HEAP…SRVD), 579–618 (KKSAGVGVVQFDTAQNHILAAGEDNQIKFWDVDNTTMLSS), 623–662 (GGLPGLPRLRFNKEGNLLAVTTVDNGFKILANADGLRTLR), 762–801 (DQASKVVRLLYTNSGVGLLALGSNAIQRLWKWARNDQNPS), 829–867 (NPEDAVPCIALSKNDSYVMSACGGKVSLFNMMTFKVMTT), 870–910 (PPPP…VKTR), 913–952 (GHQRRITGLAFSNNLQILVSSGADAQLCVWATDTWEKKKS), and 1005–1044 (ALSAPISHASYSRNSQLVFAAFTDGNIGIFDVENLRLRCR). The tract at residues 1092 to 1129 (LESEGKWGTTPPTENGVPNGRTSTSSATSNPAADQIQR) is disordered. Residues 1113-1129 (TSTSSATSNPAADQIQR) are compositionally biased toward low complexity.

In terms of assembly, tetramer. Interacts with D53. Interacts with WOX1. Interacts with MOF1. In terms of tissue distribution, expressed in panicles, stems, leaves, spikelets and seed endosperm.

In terms of biological role, probable downstream regulator of strigolactones signaling. The protein is Protein TPR1 of Oryza sativa subsp. japonica (Rice).